A 453-amino-acid polypeptide reads, in one-letter code: Phosphoglucosamine mutase (453 aa).

Serine 108 functions as the Phosphoserine intermediate in the catalytic mechanism. The Mg(2+) site is built by serine 108, aspartate 247, aspartate 249, and aspartate 251. Serine 108 is modified (phosphoserine).

Belongs to the phosphohexose mutase family. Mg(2+) serves as cofactor. Activated by phosphorylation.

It carries out the reaction alpha-D-glucosamine 1-phosphate = D-glucosamine 6-phosphate. Its function is as follows. Catalyzes the conversion of glucosamine-6-phosphate to glucosamine-1-phosphate. This chain is Phosphoglucosamine mutase, found in Methylobacillus flagellatus (strain ATCC 51484 / DSM 6875 / VKM B-1610 / KT).